The primary structure comprises 144 residues: 3-hydroxyacyl-[acyl-carrier-protein] dehydratase FabZ (144 aa).

H51 is a catalytic residue.

This sequence belongs to the thioester dehydratase family. FabZ subfamily.

It localises to the cytoplasm. It catalyses the reaction a (3R)-hydroxyacyl-[ACP] = a (2E)-enoyl-[ACP] + H2O. Its function is as follows. Involved in unsaturated fatty acids biosynthesis. Catalyzes the dehydration of short chain beta-hydroxyacyl-ACPs and long chain saturated and unsaturated beta-hydroxyacyl-ACPs. This Clostridium botulinum (strain ATCC 19397 / Type A) protein is 3-hydroxyacyl-[acyl-carrier-protein] dehydratase FabZ.